A 189-amino-acid polypeptide reads, in one-letter code: Elongation factor P (189 aa).

It belongs to the elongation factor P family.

It is found in the cytoplasm. It functions in the pathway protein biosynthesis; polypeptide chain elongation. In terms of biological role, involved in peptide bond synthesis. Stimulates efficient translation and peptide-bond synthesis on native or reconstituted 70S ribosomes in vitro. Probably functions indirectly by altering the affinity of the ribosome for aminoacyl-tRNA, thus increasing their reactivity as acceptors for peptidyl transferase. The polypeptide is Elongation factor P (Rhizobium radiobacter (Agrobacterium tumefaciens)).